Here is a 415-residue protein sequence, read N- to C-terminus: Adipocyte plasma membrane-associated protein (415 aa).

Residues 1 to 30 (MNEAEGLRQRRPLRPQVITEDSPAQEAKEG) form a disordered region. Over 1–39 (MNEAEGLRQRRPLRPQVITEDSPAQEAKEGSAYSSKVFR) the chain is Cytoplasmic. A helical transmembrane segment spans residues 40 to 60 (VTFLTLAASLAVPLLGATVLL). Residues 61-412 (DCPIDPQPIS…RSPFICRLNL (352 aa)) are Extracellular-facing. An N-linked (GlcNAc...) asparagine glycan is attached at asparagine 159.

The protein belongs to the strictosidine synthase family.

It localises to the membrane. The sequence is that of Adipocyte plasma membrane-associated protein (APMAP) from Gallus gallus (Chicken).